A 115-amino-acid polypeptide reads, in one-letter code: Small ribosomal subunit protein bS6 (115 aa).

The protein belongs to the bacterial ribosomal protein bS6 family.

Binds together with bS18 to 16S ribosomal RNA. The protein is Small ribosomal subunit protein bS6 of Picosynechococcus sp. (strain ATCC 27264 / PCC 7002 / PR-6) (Agmenellum quadruplicatum).